The sequence spans 710 residues: Lactoperoxidase (710 aa).

The N-terminal stretch at 1–23 is a signal peptide; it reads MKVLLHLPALLASLTLLQTAASA. Positions 24–80 are excised as a propeptide; it reads SDDPTAETDIIHDTVEEVKVWVNKAFLDSRDRLKMAMTTKIHSTRHLSDYLKHAKGR. Cysteines 130 and 143 form a disulfide. Asp-223 lines the heme b pocket. His-224 serves as the catalytic Proton acceptor. Asp-225 is a Ca(2+) binding site. 2 disulfides stabilise this stretch: Cys-244/Cys-254 and Cys-248/Cys-272. Residues Thr-299, Phe-301, Asp-303, and Ser-305 each coordinate Ca(2+). Phosphoserine is present on Ser-313. Cys-352 and Cys-363 are oxidised to a cystine. Heme b-binding residues include Glu-373 and His-466. Tyr-480 is modified (3'-nitrotyrosine). Disulfide bonds link Cys-571–Cys-628 and Cys-669–Cys-694.

Belongs to the peroxidase family. Requires Ca(2+) as cofactor. Heme b serves as cofactor. As to expression, expressed in the colon, including colonocytes and mucin-containing goblet cells. Not detected in the ileum.

The protein localises to the secreted. The protein resides in the cytoplasm. The catalysed reaction is 2 a phenolic donor + H2O2 = 2 a phenolic radical donor + 2 H2O. It catalyses the reaction thiocyanate + H2O2 + H(+) = hypothiocyanous acid + H2O. It carries out the reaction iodide + H2O2 = hypoiodite + H2O. In terms of biological role, heme-containing oxidoreductase which catalyzes the conversion of thiocyanate (SCN(-)) into antimicrobial agent hypothiocyanous acid (OSCN(-)) in the presence of hydrogen peroxide (H2O2). Also involved in the conversion of iodide (I(-)) into hypoiodite (IO(-)) in the presence of H2O2. Responsible for the inactivation of a wide range of micro-organisms and hence, important component of defense mechanism. May be implicated in airway host defense against infection. May contribute to maintaining an appropriate H2O2 cellular level, therefore protecting cells from H2O2-caused injuries and inflammation. The polypeptide is Lactoperoxidase (Mus musculus (Mouse)).